We begin with the raw amino-acid sequence, 313 residues long: Protoheme IX farnesyltransferase (313 aa).

8 consecutive transmembrane segments (helical) span residues Ile-23–Ile-43, Pro-56–Leu-76, Leu-107–Leu-127, Leu-128–Leu-148, Asn-155–Thr-175, Ala-182–Met-202, Leu-243–Leu-263, and Tyr-291–Phe-311.

This sequence belongs to the UbiA prenyltransferase family. Protoheme IX farnesyltransferase subfamily.

Its subcellular location is the cell membrane. It carries out the reaction heme b + (2E,6E)-farnesyl diphosphate + H2O = Fe(II)-heme o + diphosphate. The protein operates within porphyrin-containing compound metabolism; heme O biosynthesis; heme O from protoheme: step 1/1. Converts heme B (protoheme IX) to heme O by substitution of the vinyl group on carbon 2 of heme B porphyrin ring with a hydroxyethyl farnesyl side group. This chain is Protoheme IX farnesyltransferase, found in Mycobacteroides abscessus (strain ATCC 19977 / DSM 44196 / CCUG 20993 / CIP 104536 / JCM 13569 / NCTC 13031 / TMC 1543 / L948) (Mycobacterium abscessus).